Reading from the N-terminus, the 1069-residue chain is Calcium-transporting ATPase 10, plasma membrane-type (1069 aa).

The tract at residues 1-29 is disordered; that stretch reads MSGQFNNSPRGEDKDVEAGTSSFTEYEDS. Serine 2 bears the N-acetylserine mark. Residues 2–180 are Cytoplasmic-facing; it reads SGQFNNSPRG…NTYPQKKGRS (179 aa). The segment at 42-53 is interaction with calmodulin; that stretch reads ERLRRWRQAALV. Residues 181-201 traverse the membrane as a helical segment; the sequence is FWRFVWEASQDLTLIILIVAA. The Lumenal segment spans residues 202-219; that stretch reads VASLALGIKTEGIEKGWY. A helical membrane pass occupies residues 220–240; that stretch reads DGISIAFAVLLVIVVTATSDY. At 241–369 the chain is on the cytoplasmic side; the sequence is RQSLQFQNLN…GGETPLQVRL (129 aa). The helical transmembrane segment at 370-389 threads the bilayer; it reads NGVATFIGIVGLTVAGVVLF. Residues 390-426 lie on the Lumenal side of the membrane; sequence VLVVRYFTGHTKNEQGGPQFIGGKTKFEHVLDDLVEI. The chain crosses the membrane as a helical span at residues 427 to 444; sequence FTVAVTIVVVAVPEGLPL. The Cytoplasmic portion of the chain corresponds to 445-844; the sequence is AVTLTLAYSM…RWGRSVYANI (400 aa). Aspartate 482 functions as the 4-aspartylphosphate intermediate in the catalytic mechanism. Residues aspartate 789 and aspartate 793 each contribute to the Mg(2+) site. A helical transmembrane segment spans residues 845 to 863; that stretch reads QKFIQFQLTVNVAALVINV. At 864–874 the chain is on the lumenal side; that stretch reads VAAISAGEVPL. The chain crosses the membrane as a helical span at residues 875 to 895; sequence TAVQLLWVNLIMDTLGALALA. At 896-915 the chain is on the cytoplasmic side; sequence TEPPTDHLMDRAPVGRREPL. A helical transmembrane segment spans residues 916 to 938; it reads ITNIMWRNLFIQAMYQVTVLLIL. At 939 to 951 the chain is on the lumenal side; the sequence is NFRGISILHLKSK. A helical transmembrane segment spans residues 952-973; it reads PNAERVKNTVIFNAFVICQVFN. Topologically, residues 974 to 991 are cytoplasmic; sequence EFNARKPDEINIFRGVLR. The chain crosses the membrane as a helical span at residues 992 to 1013; the sequence is NHLFVGIISITIVLQVVIVEFL. Topologically, residues 1014-1023 are lumenal; sequence GTFASTTKLD. Residues 1024 to 1045 form a helical membrane-spanning segment; it reads WEMWLVCIGIGSISWPLAVIGK. The Cytoplasmic portion of the chain corresponds to 1046 to 1069; that stretch reads LIPVPETPVSQYFRINRWRRNSSG.

This sequence belongs to the cation transport ATPase (P-type) (TC 3.A.3) family. Type IIB subfamily.

It is found in the membrane. The enzyme catalyses Ca(2+)(in) + ATP + H2O = Ca(2+)(out) + ADP + phosphate + H(+). With respect to regulation, activated by calmodulin. Its function is as follows. This magnesium-dependent enzyme catalyzes the hydrolysis of ATP coupled with the translocation of calcium from the cytosol into the endoplasmic reticulum. This Arabidopsis thaliana (Mouse-ear cress) protein is Calcium-transporting ATPase 10, plasma membrane-type (ACA10).